Reading from the N-terminus, the 393-residue chain is 5-amino-6-(D-ribitylamino)uracil--L-tyrosine 4-hydroxyphenyl transferase (393 aa).

The region spanning Val71 to Asn318 is the Radical SAM core domain. Residues Cys85, Cys89, and Cys92 each contribute to the [4Fe-4S] cluster site.

The protein belongs to the radical SAM superfamily. CofH family. In terms of assembly, consists of two subunits, CofG and CofH. The cofactor is [4Fe-4S] cluster.

It carries out the reaction 5-amino-6-(D-ribitylamino)uracil + L-tyrosine + S-adenosyl-L-methionine = 5-amino-5-(4-hydroxybenzyl)-6-(D-ribitylimino)-5,6-dihydrouracil + 2-iminoacetate + 5'-deoxyadenosine + L-methionine + H(+). It functions in the pathway cofactor biosynthesis; coenzyme F0 biosynthesis. Catalyzes the radical-mediated synthesis of 5-amino-5-(4-hydroxybenzyl)-6-(D-ribitylimino)-5,6-dihydrouracil from 5-amino-6-(D-ribitylamino)uracil and L-tyrosine. The protein is 5-amino-6-(D-ribitylamino)uracil--L-tyrosine 4-hydroxyphenyl transferase of Trichodesmium erythraeum (strain IMS101).